The sequence spans 279 residues: uncharacterized protein (279 aa).

Residues 14–71 enclose the HTH lysR-type domain; that stretch reads ITPNQIKLLIALHKTKSQNEAAKLLNIKPSSFNIQLKRLENKLGVKLYYSSPNGTVLT. Residues 31 to 50 constitute a DNA-binding region (H-T-H motif); the sequence is QNEAAKLLNIKPSSFNIQLK.

This sequence belongs to the LysR transcriptional regulatory family.

This is an uncharacterized protein from Methanocaldococcus jannaschii (strain ATCC 43067 / DSM 2661 / JAL-1 / JCM 10045 / NBRC 100440) (Methanococcus jannaschii).